A 309-amino-acid chain; its full sequence is Protein FdhE homolog (309 aa).

It belongs to the FdhE family.

It localises to the cytoplasm. Functionally, necessary for formate dehydrogenase activity. This chain is Protein FdhE homolog, found in Pasteurella multocida (strain Pm70).